The chain runs to 1072 residues: Zn(2)-C6 fungal-type transcription factor FTF2 (1072 aa).

A DNA-binding region (zn(2)-C6 fungal-type) is located at residues 179-206 (CIACRRKKIRCSGEKPACKHCLRSRIPC).

The protein localises to the nucleus. In terms of biological role, zn(2)-C6 fungal-type transcription factor that has a role in conidia production and also in plant colonization. Acts as a negative regulator of the production of macroconidia and is required for full virulence and the positive regulation of SIX effectors. In addition, FTF2 is also involved in the regulation of class II hydrophobins FOXG_02746 and FOXG_02748 likely required for plant colonization. The polypeptide is Zn(2)-C6 fungal-type transcription factor FTF2 (Fusarium oxysporum f. sp. lycopersici (strain 4287 / CBS 123668 / FGSC 9935 / NRRL 34936) (Fusarium vascular wilt of tomato)).